The primary structure comprises 421 residues: Medium-chain specific acyl-CoA dehydrogenase, mitochondrial (421 aa).

Residues 1–25 constitute a mitochondrion transit peptide; the sequence is MAAAFRRGCRVLRSVSHFECRTQHS. K30 and K69 each carry N6-acetyllysine; alternate. N6-succinyllysine; alternate occurs at positions 30 and 69. Position 79 is an N6-acetyllysine (K79). Position 158–167 (158–167) interacts with FAD; it reads YCVTEPSAGS. Residue S167 participates in octanoyl-CoA binding. The residue at position 179 (K179) is an N6-succinyllysine. Position 191–193 (191–193) interacts with FAD; sequence WIT. K212 is subject to N6-acetyllysine; alternate. Position 212 is an N6-succinyllysine; alternate (K212). Position 216 (S216) interacts with octanoyl-CoA. 4 positions are modified to N6-acetyllysine; alternate: K217, K235, K259, and K271. 4 positions are modified to N6-succinyllysine; alternate: K217, K235, K259, and K271. Octanoyl-CoA contacts are provided by D278 and R281. K301 carries the N6-acetyllysine modification. FAD contacts are provided by residues 306-308 and 316-317; these read RKT and HQ. Residues R349 and T351 each contribute to the octanoyl-CoA site. T351 is modified (phosphothreonine). Residue 374 to 378 participates in FAD binding; sequence QIFGG. E401 is an octanoyl-CoA binding site. The active-site Proton acceptor is the E401. 402 to 405 lines the FAD pocket; that stretch reads GTAQ.

The protein belongs to the acyl-CoA dehydrogenase family. As to quaternary structure, homotetramer. Interacts with the heterodimeric electron transfer flavoprotein ETF. The cofactor is FAD. Post-translationally, acetylated. Could occur at proximity of the cofactor-binding sites and reduce the catalytic activity. Could be deacetylated by SIRT3.

It is found in the mitochondrion matrix. The enzyme catalyses a medium-chain 2,3-saturated fatty acyl-CoA + oxidized [electron-transfer flavoprotein] + H(+) = a medium-chain (2E)-enoyl-CoA + reduced [electron-transfer flavoprotein]. It catalyses the reaction pentanoyl-CoA + oxidized [electron-transfer flavoprotein] + H(+) = (2E)-pentenoyl-CoA + reduced [electron-transfer flavoprotein]. It carries out the reaction hexanoyl-CoA + oxidized [electron-transfer flavoprotein] + H(+) = (2E)-hexenoyl-CoA + reduced [electron-transfer flavoprotein]. The catalysed reaction is octanoyl-CoA + oxidized [electron-transfer flavoprotein] + H(+) = (2E)-octenoyl-CoA + reduced [electron-transfer flavoprotein]. The enzyme catalyses decanoyl-CoA + oxidized [electron-transfer flavoprotein] + H(+) = (2E)-decenoyl-CoA + reduced [electron-transfer flavoprotein]. It catalyses the reaction dodecanoyl-CoA + oxidized [electron-transfer flavoprotein] + H(+) = (2E)-dodecenoyl-CoA + reduced [electron-transfer flavoprotein]. It carries out the reaction tetradecanoyl-CoA + oxidized [electron-transfer flavoprotein] + H(+) = (2E)-tetradecenoyl-CoA + reduced [electron-transfer flavoprotein]. The catalysed reaction is oxidized [electron-transfer flavoprotein] + hexadecanoyl-CoA + H(+) = (2E)-hexadecenoyl-CoA + reduced [electron-transfer flavoprotein]. The protein operates within lipid metabolism; mitochondrial fatty acid beta-oxidation. Functionally, medium-chain specific acyl-CoA dehydrogenase is one of the acyl-CoA dehydrogenases that catalyze the first step of mitochondrial fatty acid beta-oxidation, an aerobic process breaking down fatty acids into acetyl-CoA and allowing the production of energy from fats. The first step of fatty acid beta-oxidation consists in the removal of one hydrogen from C-2 and C-3 of the straight-chain fatty acyl-CoA thioester, resulting in the formation of trans-2-enoyl-CoA. Electron transfer flavoprotein (ETF) is the electron acceptor that transfers electrons to the main mitochondrial respiratory chain via ETF-ubiquinone oxidoreductase (ETF dehydrogenase). Among the different mitochondrial acyl-CoA dehydrogenases, medium-chain specific acyl-CoA dehydrogenase acts specifically on acyl-CoAs with saturated 6 to 12 carbons long primary chains. This chain is Medium-chain specific acyl-CoA dehydrogenase, mitochondrial, found in Mus musculus (Mouse).